We begin with the raw amino-acid sequence, 374 residues long: Quinolinate synthase (374 aa).

Iminosuccinate is bound by residues histidine 53 and serine 70. Cysteine 116 serves as a coordination point for [4Fe-4S] cluster. Residues 148–150 and serine 169 contribute to the iminosuccinate site; that span reads YMN. [4Fe-4S] cluster is bound at residue cysteine 236. Residues 262–264 and threonine 279 each bind iminosuccinate; that span reads HPE. Cysteine 327 serves as a coordination point for [4Fe-4S] cluster.

Belongs to the quinolinate synthase family. Type 3 subfamily. Requires [4Fe-4S] cluster as cofactor.

The protein localises to the cytoplasm. The catalysed reaction is iminosuccinate + dihydroxyacetone phosphate = quinolinate + phosphate + 2 H2O + H(+). Its pathway is cofactor biosynthesis; NAD(+) biosynthesis; quinolinate from iminoaspartate: step 1/1. Catalyzes the condensation of iminoaspartate with dihydroxyacetone phosphate to form quinolinate. The protein is Quinolinate synthase of Haloarcula marismortui (strain ATCC 43049 / DSM 3752 / JCM 8966 / VKM B-1809) (Halobacterium marismortui).